The chain runs to 206 residues: Cytidylate kinase (206 aa).

Residue 7–15 coordinates ATP; that stretch reads GVAASGKSS.

The protein belongs to the cytidylate kinase family. Type 1 subfamily.

It is found in the cytoplasm. It catalyses the reaction CMP + ATP = CDP + ADP. The enzyme catalyses dCMP + ATP = dCDP + ADP. The sequence is that of Cytidylate kinase from Deinococcus radiodurans (strain ATCC 13939 / DSM 20539 / JCM 16871 / CCUG 27074 / LMG 4051 / NBRC 15346 / NCIMB 9279 / VKM B-1422 / R1).